A 124-amino-acid polypeptide reads, in one-letter code: MALHSAIKGKLISVIGDEDTCVGFLLGGVGEINKNRHPNFMVVDKNTAVSELEDCFKRFLKRDDIDIILINQNCAELIRHVIDAHTSPVPAVLEIPSKDHPYDASKDSILRRARGMFNPEDLVR.

The residue at position 87 (Ser-87) is a Phosphoserine.

It belongs to the V-ATPase F subunit family. As to quaternary structure, V-ATPase is a heteromultimeric enzyme made up of two complexes: the ATP-hydrolytic V1 complex and the proton translocation V0 complex. The V1 complex consists of three catalytic AB heterodimers that form a heterohexamer, three peripheral stalks each consisting of EG heterodimers, one central rotor including subunits D and F, and the regulatory subunits C and H. The proton translocation complex V0 consists of the proton transport subunit a, a ring of proteolipid subunits c9c'', rotary subunit d, subunits e and f, and the accessory subunits VhaAC45 and ATP6AP2.

Functionally, subunit of the V1 complex of vacuolar(H+)-ATPase (V-ATPase), a multisubunit enzyme composed of a peripheral complex (V1) that hydrolyzes ATP and a membrane integral complex (V0) that translocates protons. V-ATPase is responsible for acidifying and maintaining the pH of intracellular compartments and in some cell types, is targeted to the plasma membrane, where it is responsible for acidifying the extracellular environment. The chain is V-type proton ATPase subunit F 1 (Vha14-1) from Drosophila melanogaster (Fruit fly).